The sequence spans 1191 residues: Major DNA-binding protein (1191 aa).

The interval 288–307 (ETTKGQSKMGKREGSDVSGG) is disordered. Residues 498–511 (CELCDKTSRIYCAH) fold into a zinc finger. The Required for filament formation motif lies at 841-842 (FW). Residues 1166–1191 (KRPNMNVFDLEPIPEKRVPVLSVDML) form a required for nuclear localization region.

Belongs to the herpesviridae major DNA-binding protein family. In terms of assembly, homooligomers. Forms double-helical filaments necessary for the formation of replication compartments within the host nucleus. Interacts with the origin-binding protein. Interacts with the helicase primase complex; this interaction stimulates primer synthesis activity of the helicase-primase complex. Interacts with the DNA polymerase. Interacts with the alkaline exonuclease; this interaction increases its nuclease processivity.

The protein resides in the host nucleus. Functionally, plays several crucial roles in viral infection. Participates in the opening of the viral DNA origin to initiate replication by interacting with the origin-binding protein. May disrupt loops, hairpins and other secondary structures present on ssDNA to reduce and eliminate pausing of viral DNA polymerase at specific sites during elongation. Promotes viral DNA recombination by performing strand-transfer, characterized by the ability to transfer a DNA strand from a linear duplex to a complementary single-stranded DNA circle. Can also catalyze the renaturation of complementary single strands. Additionally, reorganizes the host cell nucleus, leading to the formation of prereplicative sites and replication compartments. This process is driven by the protein which can form double-helical filaments in the absence of DNA. The polypeptide is Major DNA-binding protein (Gallid herpesvirus 2 (strain Chicken/Md5/ATCC VR-987) (GaHV-2)).